A 496-amino-acid polypeptide reads, in one-letter code: Neuronal acetylcholine receptor subunit beta-4 (496 aa).

An N-terminal signal peptide occupies residues 1–19 (MRSALPLVLFSLVALCGRG). The Extracellular portion of the chain corresponds to 20–236 (DCRVANAEEK…IIKRKPLFYT (217 aa)). Residues Asn36, Asn93, Asn138, and Asn166 are each glycosylated (N-linked (GlcNAc...) asparagine). Residues Cys153 and Cys167 are joined by a disulfide bond. The chain crosses the membrane as a helical span at residues 237–257 (INLIIPCVLITSLAILVFYLP). Residues 258 to 265 (SDCGEKMT) are Cytoplasmic-facing. Residue Glu262 participates in Na(+) binding. Residues 266 to 286 (LCISVLLALTVFLLLISKIVP) form a helical membrane-spanning segment. Topologically, residues 287-298 (PTSLNVPLIGKY) are extracellular. Residues 299 to 319 (LMFTMVLVTFSIVTSVCVLNV) traverse the membrane as a helical segment. At 320–464 (HHRSPSTHTM…WKYVAMVVDR (145 aa)) the chain is on the cytoplasmic side. Residues 465–485 (LFLWVFVVVCVLGTVGLFLPP) form a helical membrane-spanning segment. At 486 to 496 (LFQTHTPSEEP) the chain is on the extracellular side.

Belongs to the ligand-gated ion channel (TC 1.A.9) family. Acetylcholine receptor (TC 1.A.9.1) subfamily. Beta-4/CHRNB4 sub-subfamily. In terms of assembly, neuronal AChR is composed of two different types of subunits: alpha and beta. CHRNB4/Beta-4 subunit can be combined to CHRNA2/alpha-2, CHRNA3/alpha-3 or CHRNA4/alpha-4, CHRNA5/alpha-5 and CHRNB3/beta-3 to give rise to functional receptors. Forms stoichiometries such as (CHRNA3)2:(CHRNB4)3 or (CHRNA3:CHRNB4)2:CHRNB3. Interacts with RIC3; which is required for proper folding and assembly. Interacts with LYPD6.

The protein localises to the synaptic cell membrane. It localises to the cell membrane. It carries out the reaction Ca(2+)(in) = Ca(2+)(out). It catalyses the reaction K(+)(in) = K(+)(out). The enzyme catalyses Na(+)(in) = Na(+)(out). In terms of biological role, component of neuronal acetylcholine receptors (nAChRs) that function as pentameric, ligand-gated cation channels with high calcium permeability among other activities. nAChRs are excitatory neurotrasnmitter receptors formed by a collection of nAChR subunits known to mediate synaptic transmission in the nervous system and the neuromuscular junction. Each nAchR subunit confers differential attributes to channel properties, including activation, deactivation and desensitization kinetics, pH sensitivity, cation permeability, and binding to allosteric modulators. CHRNB4 forms heteropentameric neuronal acetylcholine receptors with CHRNA2, CHRNA3 and CHRNA4, as well as CHRNA5 and CHRNB3 as accesory subunits. CHRNA3:CHRNB4 being predominant in neurons of the autonomic ganglia, it is known as ganglionic nicotinic receptor. CHRNA3:CHRNB4 or CHRNA3:CHRNA5:CHRNB4 play also an important role in the habenulo-interpeduncular tract, modulating the mesolimbic dopamine system and affecting reward circuits and addiction. Hypothalamic CHRNA3:CHRNB4 nAChR activation by nicotine leads to activation of POMC neurons and a decrease in food intake. In Bos taurus (Bovine), this protein is Neuronal acetylcholine receptor subunit beta-4 (CHRNB4).